We begin with the raw amino-acid sequence, 606 residues long: DNA mismatch repair protein MutL (606 aa).

Positions Met340–Pro366 are disordered. A compositionally biased stretch (low complexity) spans Arg353–Pro366.

This sequence belongs to the DNA mismatch repair MutL/HexB family.

Its function is as follows. This protein is involved in the repair of mismatches in DNA. It is required for dam-dependent methyl-directed DNA mismatch repair. May act as a 'molecular matchmaker', a protein that promotes the formation of a stable complex between two or more DNA-binding proteins in an ATP-dependent manner without itself being part of a final effector complex. This is DNA mismatch repair protein MutL from Agrobacterium fabrum (strain C58 / ATCC 33970) (Agrobacterium tumefaciens (strain C58)).